The following is a 157-amino-acid chain: Crossover junction endodeoxyribonuclease RuvC (157 aa).

Catalysis depends on residues D7, E67, and D140. Positions 7, 67, and 140 each coordinate Mg(2+).

The protein belongs to the RuvC family. In terms of assembly, homodimer which binds Holliday junction (HJ) DNA. The HJ becomes 2-fold symmetrical on binding to RuvC with unstacked arms; it has a different conformation from HJ DNA in complex with RuvA. In the full resolvosome a probable DNA-RuvA(4)-RuvB(12)-RuvC(2) complex forms which resolves the HJ. It depends on Mg(2+) as a cofactor.

Its subcellular location is the cytoplasm. It catalyses the reaction Endonucleolytic cleavage at a junction such as a reciprocal single-stranded crossover between two homologous DNA duplexes (Holliday junction).. The RuvA-RuvB-RuvC complex processes Holliday junction (HJ) DNA during genetic recombination and DNA repair. Endonuclease that resolves HJ intermediates. Cleaves cruciform DNA by making single-stranded nicks across the HJ at symmetrical positions within the homologous arms, yielding a 5'-phosphate and a 3'-hydroxyl group; requires a central core of homology in the junction. The consensus cleavage sequence is 5'-(A/T)TT(C/G)-3'. Cleavage occurs on the 3'-side of the TT dinucleotide at the point of strand exchange. HJ branch migration catalyzed by RuvA-RuvB allows RuvC to scan DNA until it finds its consensus sequence, where it cleaves and resolves the cruciform DNA. The polypeptide is Crossover junction endodeoxyribonuclease RuvC (Rickettsia akari (strain Hartford)).